A 56-amino-acid polypeptide reads, in one-letter code: MCCGPCGPCCGPCCGPCCGPCGPCGGGCGPCYGPNVCGPCYACGPCGGCYCGYPCC.

This sequence belongs to the MST(3)CGP family. As to expression, testis.

This chain is Male-specific sperm protein Mst87F (Mst87F), found in Drosophila melanogaster (Fruit fly).